Consider the following 678-residue polypeptide: Vitrin (678 aa).

Positions 1–26 (MRTVVLTMKASVIEMFLVLLVTGVHS) are cleaved as a signal peptide. An LCCL domain is found at 40 to 133 (TVPQINCDVK…LSLPRWRESF (94 aa)). 2 cysteine pairs are disulfide-bonded: C46-C62 and C66-C86. Positions 154–168 (SSKSPAAQAGETTKA) are enriched in polar residues. Disordered stretches follow at residues 154–177 (SSKS…IPGT) and 199–257 (TLPR…GAAF). Residues 199 to 216 (TLPRPSPSAASTTSIPRP) are compositionally biased toward low complexity. Residues 230–240 (STATYTSSQNR) are compositionally biased toward polar residues. VWFA domains lie at 293 to 478 (DLSF…VKRV) and 495 to 668 (DIGF…IQNI). N390 and N520 each carry an N-linked (GlcNAc...) asparagine glycan.

Binds dermatan sulfate and chondroitin sulfate.

The protein localises to the secreted. It localises to the extracellular space. Its subcellular location is the extracellular matrix. Its function is as follows. Promotes matrix assembly and cell adhesiveness. Plays a role in spinal cord formation by regulating the proliferation and differentiation of neural stem cells. The sequence is that of Vitrin (VIT) from Homo sapiens (Human).